Consider the following 92-residue polypeptide: Small ribosomal subunit protein uS19 (92 aa).

The protein belongs to the universal ribosomal protein uS19 family.

Protein S19 forms a complex with S13 that binds strongly to the 16S ribosomal RNA. This Vibrio atlanticus (strain LGP32) (Vibrio splendidus (strain Mel32)) protein is Small ribosomal subunit protein uS19.